A 126-amino-acid polypeptide reads, in one-letter code: Urease subunit beta (126 aa).

This sequence belongs to the urease beta subunit family. Heterotrimer of UreA (gamma), UreB (beta) and UreC (alpha) subunits. Three heterotrimers associate to form the active enzyme.

It is found in the cytoplasm. The catalysed reaction is urea + 2 H2O + H(+) = hydrogencarbonate + 2 NH4(+). Its pathway is nitrogen metabolism; urea degradation; CO(2) and NH(3) from urea (urease route): step 1/1. This Sporosarcina pasteurii (Bacillus pasteurii) protein is Urease subunit beta.